A 373-amino-acid chain; its full sequence is Histidinol-phosphate aminotransferase (373 aa).

An N6-(pyridoxal phosphate)lysine modification is found at K231.

It belongs to the class-II pyridoxal-phosphate-dependent aminotransferase family. Histidinol-phosphate aminotransferase subfamily. The cofactor is pyridoxal 5'-phosphate.

It catalyses the reaction L-histidinol phosphate + 2-oxoglutarate = 3-(imidazol-4-yl)-2-oxopropyl phosphate + L-glutamate. It participates in amino-acid biosynthesis; L-histidine biosynthesis; L-histidine from 5-phospho-alpha-D-ribose 1-diphosphate: step 7/9. The chain is Histidinol-phosphate aminotransferase (hisC) from Methanocaldococcus jannaschii (strain ATCC 43067 / DSM 2661 / JAL-1 / JCM 10045 / NBRC 100440) (Methanococcus jannaschii).